Consider the following 197-residue polypeptide: Ribosomal RNA large subunit methyltransferase E (197 aa).

S-adenosyl-L-methionine is bound by residues Gly52, Trp54, Asp72, Asp88, and Asp112. Lys152 serves as the catalytic Proton acceptor.

Belongs to the class I-like SAM-binding methyltransferase superfamily. RNA methyltransferase RlmE family.

The protein resides in the cytoplasm. The catalysed reaction is uridine(2552) in 23S rRNA + S-adenosyl-L-methionine = 2'-O-methyluridine(2552) in 23S rRNA + S-adenosyl-L-homocysteine + H(+). In terms of biological role, specifically methylates the uridine in position 2552 of 23S rRNA at the 2'-O position of the ribose in the fully assembled 50S ribosomal subunit. In Nitrosopumilus maritimus (strain SCM1), this protein is Ribosomal RNA large subunit methyltransferase E.